Reading from the N-terminus, the 224-residue chain is Response regulator protein GraR (224 aa).

In terms of domain architecture, Response regulatory spans 2 to 115; sequence QILLVEDDNT…VLIAKLQAIY (114 aa). Asp51 carries the post-translational modification 4-aspartylphosphate. The segment at residues 126–224 is a DNA-binding region (ompR/PhoB-type); it reads KRTLTWQDAV…KVGKGYMAHE (99 aa). Phosphothreonine is present on residues Thr128, Thr130, and Thr149.

In terms of assembly, interacts with GraX. Post-translationally, phosphorylated by GraS. Phosphorylated by Stk1; phosphorylation increases the DNA-binding activity of GraR.

The protein resides in the cytoplasm. Its function is as follows. Member of the two-component regulatory system GraR/GraS involved in resistance against cationic antimicrobial peptides (CAMPs). Upon phosphorylation by GraS, functions as a transcription regulator by direct binding to promoter regions of target genes such as adhesins, exoproteins, transporters, toxins, and proteins involved in cell wall synthesis. Down-regulates the expression of many genes involved in RNA and amino acid synthesis or glycolysis. In Staphylococcus aureus (strain Mu50 / ATCC 700699), this protein is Response regulator protein GraR (graR).